A 217-amino-acid chain; its full sequence is Fucoxanthin-chlorophyll a-c binding protein A, chloroplastic (217 aa).

The transit peptide at 1-39 (MKSAVMAVACAAAPGLRRPSAFNGAALTTSAKSSSAMKM) directs the protein to the chloroplast. 3 helical membrane passes run 81–101 (IAMLAIAGHLTQQNARLPGML), 122–142 (IPPAGLAQIFAFIGFLELAVM), and 183–203 (GRAAQMGILALMVHEELNNKP).

It belongs to the fucoxanthin chlorophyll protein family. In terms of assembly, the LHC complex of chromophytic algae is composed of fucoxanthin, chlorophyll A and C bound non-covalently by fucoxanthin chlorophyll proteins (FCPs). The ratio of pigments in this LHC is; fucoxanthin: chlorophyll C: chlorophyll A; (0.6-1): (0.1-0.3): (1).

Its subcellular location is the plastid. It localises to the chloroplast thylakoid membrane. Its function is as follows. The light-harvesting complex (LHC) functions as a light receptor, it captures and delivers excitation energy to photosystems with which it is closely associated. Energy is transferred from the carotenoid and chlorophyll C (or B) to chlorophyll A and the photosynthetic reaction centers where it is used to synthesize ATP and reducing power. In Macrocystis pyrifera (Giant kelp), this protein is Fucoxanthin-chlorophyll a-c binding protein A, chloroplastic (FCPA).